A 755-amino-acid chain; its full sequence is MSTSRRDFLKYFAMSAAVAAASGAGFGSLALAADNRPEKWVKGVCRYCGTGCGVLVGVKDGKAVAIQGDPNNHNAGLLCLKGSLLIPVLNSKERVTQPLVRRHKGGKLEPVSWDEALDLMASRFRSSIDMYGPNSVAWYGSGQCLTEESYVANKIFKGGFGTNNVDGNPRLCMASAVGGYVTSFGKDEPMGTYADIDQATCFFIIGSNTSEAHPVLFRRIARRKQVEPGVKIIVADPRRTNTSRIADMHVAFRPGTDLAFMHSMAWVIINEELDNPRFWQRYVNFMDAEGKPSDFEGYKAFLENYRPEKVAEICRVPVEQIYGAARAFAESAATMSLWCMGINQRVQGVFANNLIHNLHLITGQICRPGATSFSLTGQPNACGGVRDGGALSHLLPAGRAIPNAKHRAEMEKLWGLPEGRIAPEPGYHTVALFEALGRGDVKCMIICETNPAHTLPNLNKVHKAMSHPESFIVCIEAFPDAVTLEYADLVLPPAFWCERDGVYGCGERRYSLTEKAVDPPGQCRPTVNTLVEFARRAGVDPQLVNFRNAEDVWNEWRMVSKGTTYDFWGMTRERLRKESGLIWPCPSEDHPGTSLRYVRGQDPCVPADHPDRFFFYGKPDGRAVIWMRPAKGAAEEPDAEYPLYLTSMRVIDHWHTATMTGKVPELQKANPIAFVEINEEDAARTGIKHGDSVIVETRRDAMELPARVSDVCRPGLIAVPFFDPKKLVNKLFLDATDPVSREPEYKICAARVRKA.

Residues 1–32 (MSTSRRDFLKYFAMSAAVAAASGAGFGSLALA) constitute a signal peptide (tat-type signal). Positions 38 to 93 (EKWVKGVCRYCGTGCGVLVGVKDGKAVAIQGDPNNHNAGLLCLKGSLLIPVLNSKE) constitute a 4Fe-4S Mo/W bis-MGD-type domain. The [4Fe-4S] cluster site is built by cysteine 45, cysteine 48, cysteine 52, and cysteine 79. Mo-bis(molybdopterin guanine dinucleotide) contacts are provided by residues lysine 81, glutamine 143, asparagine 168, cysteine 172, 208-212 (NTSEA), 236-238 (DPR), 255-257 (GTD), methionine 340, glutamine 344, asparagine 450, 475-477 (IEA), and 647-656 (SMRVIDHWHT). Residues 648 to 653 (MRVIDH) and phenylalanine 721 contribute to the substrate site. Asparagine 729 and lysine 746 together coordinate Mo-bis(molybdopterin guanine dinucleotide).

Belongs to the prokaryotic molybdopterin-containing oxidoreductase family. NasA/NapA/NarB subfamily. Monomer. Component of the periplasmic nitrate reductase NapAB complex composed of NapA and NapB. [4Fe-4S] cluster serves as cofactor. Requires Mo-bis(molybdopterin guanine dinucleotide) as cofactor. Post-translationally, predicted to be exported by the Tat system. The position of the signal peptide cleavage has been experimentally proven.

It is found in the periplasm. The enzyme catalyses 2 Fe(II)-[cytochrome] + nitrate + 2 H(+) = 2 Fe(III)-[cytochrome] + nitrite + H2O. Its activity is regulated as follows. Activated by potassium and sodium ions and inhibited by magnesium and calcium ions. In terms of biological role, catalytic subunit of the periplasmic nitrate reductase complex NapAB. Receives electrons from NapB and catalyzes the reduction of nitrate to nitrite. The polypeptide is Periplasmic nitrate reductase (Desulfovibrio desulfuricans (strain ATCC 27774 / DSM 6949 / MB)).